Reading from the N-terminus, the 807-residue chain is Poly-beta-1,6-N-acetyl-D-glucosamine export protein (807 aa).

The first 26 residues, 1–26 (MYSSSRKRCPKTKWALKLLTAAFLAA), serve as a signal peptide directing secretion. TPR repeat units lie at residues 98 to 131 (ARGYAAVAVAYRNLQQWQNSLTLWQKALSLEPQN), 165 to 198 (KANLLAEAYIYKLAGRHQDELRAMTESLPENAST), and 279 to 311 (RIQVDHLGALLTRDRYKDVISHYQRLKKTGQII).

It localises to the cell outer membrane. Exports the biofilm adhesin polysaccharide poly-beta-1,6-N-acetyl-D-glucosamine (PGA) across the outer membrane. The PGA transported seems to be partially N-deacetylated since N-deacetylation of PGA by PgaB is needed for PGA export through the PgaA porin. In Escherichia coli O157:H7, this protein is Poly-beta-1,6-N-acetyl-D-glucosamine export protein (pgaA).